We begin with the raw amino-acid sequence, 307 residues long: Methionyl-tRNA formyltransferase (307 aa).

108–111 (SLLP) provides a ligand contact to (6S)-5,6,7,8-tetrahydrofolate.

The protein belongs to the Fmt family.

It carries out the reaction L-methionyl-tRNA(fMet) + (6R)-10-formyltetrahydrofolate = N-formyl-L-methionyl-tRNA(fMet) + (6S)-5,6,7,8-tetrahydrofolate + H(+). Its function is as follows. Attaches a formyl group to the free amino group of methionyl-tRNA(fMet). The formyl group appears to play a dual role in the initiator identity of N-formylmethionyl-tRNA by promoting its recognition by IF2 and preventing the misappropriation of this tRNA by the elongation apparatus. The polypeptide is Methionyl-tRNA formyltransferase (Xanthomonas oryzae pv. oryzae (strain MAFF 311018)).